Here is a 125-residue protein sequence, read N- to C-terminus: Natriuretic peptide GNP1 (125 aa).

The first 25 residues, 1-25, serve as a signal peptide directing secretion; sequence MDPRLVRAGSLVLLLALLVQDQGAA. Disordered regions lie at residues 23–78 and 105–125; these read GAAH…PAFK and VSGMGCNKFDPNKGSSSTGKK. Positions 26–85 are excised as a propeptide; the sequence is HPARAGQKYKPLIRRSEEDSQALGQEGDVAARAADEEEDAAGPGDALRQPAFKTLLASRE. Cys-94 and Cys-110 are oxidised to a cystine.

Belongs to the natriuretic peptide family. Expressed by the venom gland.

It is found in the secreted. Exhibits natriuretic and vasodepressor activity. Acts by stimulating cGMP. The chain is Natriuretic peptide GNP1 from Varanus varius (Lace monitor lizard).